We begin with the raw amino-acid sequence, 378 residues long: Spermidine/putrescine import ATP-binding protein PotA (378 aa).

Positions 18–248 (VLLSGISKSF…PKNLFVAGFI (231 aa)) constitute an ABC transporter domain. 50–57 (GPSGCGKT) lines the ATP pocket.

Belongs to the ABC transporter superfamily. Spermidine/putrescine importer (TC 3.A.1.11.1) family. As to quaternary structure, the complex is composed of two ATP-binding proteins (PotA), two transmembrane proteins (PotB and PotC) and a solute-binding protein (PotD).

The protein localises to the cell inner membrane. It carries out the reaction ATP + H2O + polyamine-[polyamine-binding protein]Side 1 = ADP + phosphate + polyamineSide 2 + [polyamine-binding protein]Side 1.. Functionally, part of the ABC transporter complex PotABCD involved in spermidine/putrescine import. Responsible for energy coupling to the transport system. In Salmonella typhi, this protein is Spermidine/putrescine import ATP-binding protein PotA.